The primary structure comprises 525 residues: Serine/threonine protein phosphatase 2A 55 kDa regulatory subunit B beta isoform (525 aa).

Residues 1-30 form a disordered region; it reads MDPSSKSPDDDDLRPEAEAARRPQPQPQPR. WD repeat units lie at residues 48–87 and 124–165; these read QEVD…DSAS and EIEE…VKRI. A disordered region spans residues 169–191; sequence NLNTSQSSGNGTTSSSSSSSSRA. Over residues 171 to 189 the composition is skewed to low complexity; that stretch reads NTSQSSGNGTTSSSSSSSS. WD repeat units follow at residues 244-282, 293-333, 352-390, and 495-525; these read AHDY…QSFN, DLTE…LCDN, EIIA…GPVA, and DLST…MYYA.

This sequence belongs to the phosphatase 2A regulatory subunit B family. In terms of assembly, PP2A consists of a common heteromeric enzyme, composed of a catalytic subunit (subunits C), a constant regulatory subunit (subunit A), and a variety of regulatory subunits such as subunits B (the R2/B/PR55/B55, R3/B''/PR72/PR130/PR59 and R5/B'/B56 families).

In terms of biological role, the B regulatory subunit may modulate substrate selectivity and catalytic activity, and may also direct the localization of the catalytic enzyme to a particular subcellular compartment. The sequence is that of Serine/threonine protein phosphatase 2A 55 kDa regulatory subunit B beta isoform from Oryza sativa subsp. japonica (Rice).